The chain runs to 349 residues: Hydroxymethylglutaryl-CoA synthase (349 aa).

Asp30 lines the (3S)-3-hydroxy-3-methylglutaryl-CoA pocket. The active-site Proton donor/acceptor is the Glu82. Cys114 serves as a coordination point for (3S)-3-hydroxy-3-methylglutaryl-CoA. Cys114 (acyl-thioester intermediate) is an active-site residue. Residue Arg203 coordinates CoA. Residues Thr205 and His238 each contribute to the (3S)-3-hydroxy-3-methylglutaryl-CoA site. His238 acts as the Proton donor/acceptor in catalysis. A CoA-binding site is contributed by Lys243. The (3S)-3-hydroxy-3-methylglutaryl-CoA site is built by Lys247, Asn270, and Ser300.

Belongs to the thiolase-like superfamily. Archaeal HMG-CoA synthase family. Interacts with acetoacetyl-CoA thiolase that catalyzes the precedent step in the pathway and with a DUF35 protein. The acetoacetyl-CoA thiolase/HMG-CoA synthase complex channels the intermediate via a fused CoA-binding site, which allows for efficient coupling of the endergonic thiolase reaction with the exergonic HMGCS reaction.

It catalyses the reaction acetoacetyl-CoA + acetyl-CoA + H2O = (3S)-3-hydroxy-3-methylglutaryl-CoA + CoA + H(+). The protein operates within metabolic intermediate biosynthesis; (R)-mevalonate biosynthesis; (R)-mevalonate from acetyl-CoA: step 2/3. Its function is as follows. Catalyzes the condensation of acetyl-CoA with acetoacetyl-CoA to form 3-hydroxy-3-methylglutaryl-CoA (HMG-CoA). Functions in the mevalonate (MVA) pathway leading to isopentenyl diphosphate (IPP), a key precursor for the biosynthesis of isoprenoid compounds that are building blocks of archaeal membrane lipids. The protein is Hydroxymethylglutaryl-CoA synthase of Methanothermococcus thermolithotrophicus (Methanococcus thermolithotrophicus).